The chain runs to 177 residues: Large ribosomal subunit protein uL6 (177 aa).

This sequence belongs to the universal ribosomal protein uL6 family. In terms of assembly, part of the 50S ribosomal subunit.

Its function is as follows. This protein binds to the 23S rRNA, and is important in its secondary structure. It is located near the subunit interface in the base of the L7/L12 stalk, and near the tRNA binding site of the peptidyltransferase center. The sequence is that of Large ribosomal subunit protein uL6 from Verminephrobacter eiseniae (strain EF01-2).